The chain runs to 94 residues: Mitochondrial import receptor subunit TOM9-1 (94 aa).

The Cytoplasmic segment spans residues 1 to 48 (MAPKKIGAGKGDSSILAKISNYDIVSQGRRAACDAVYVSKKLLKSTGK). A helical membrane pass occupies residues 49–66 (AAWIAGTTFLILAVPLIL). Residues 67–94 (ELEQDHRLGEIDFEQASLLGTPPVGAML) are Mitochondrial intermembrane-facing.

It belongs to the Tom22 family. As to quaternary structure, forms part of the preprotein translocase complex of the outer mitochondrial membrane (TOM complex) which consists of at least 6 different proteins (TOM5, TOM6, TOM7, TOM20, TOM22/TOM9 and TOM40). Expressed in roots, flowers, young cotyledons and leaves.

It localises to the mitochondrion outer membrane. In terms of biological role, central component of the receptor complex responsible for the recognition and translocation of cytosolically synthesized mitochondrial preproteins. Together with TOM20 functions as the transit peptide receptor at the surface of the mitochondrion outer membrane and facilitates the movement of preproteins into the translocation pore. The sequence is that of Mitochondrial import receptor subunit TOM9-1 (TOM9-1) from Arabidopsis thaliana (Mouse-ear cress).